The sequence spans 665 residues: Probable protein transport Sec1a (665 aa).

The disordered stretch occupies residues 543 to 594; the sequence is PSPSFRGIPSASTQTSPAHQPAQSMRSRRTGGTWARPRDSDDGYSSDSVLKH. 2 stretches are compositionally biased toward polar residues: residues 552–567 and 585–594; these read SAST…AQSM and GYSSDSVLKH.

It belongs to the STXBP/unc-18/SEC1 family.

Involved in the vesicle trafficking. Binds syntaxins. This Oryza sativa subsp. japonica (Rice) protein is Probable protein transport Sec1a.